Reading from the N-terminus, the 598-residue chain is Fumarate reductase flavoprotein subunit (598 aa).

FAD is bound by residues 12-16, 36-38, 44-52, 156-158, and Asp212; these read GAGGA, ISK, SHTVAAEGG, and HFV. His45 carries the post-translational modification Tele-8alpha-FAD histidine. Residues His233 and Arg249 contribute to the active site. Residues 356-357, Glu380, and 391-397 contribute to the FAD site; these read HY and RLGSNSL. The segment at 577–598 is disordered; it reads AKRVYGGEADAQEKSDKEQANG. Basic and acidic residues predominate over residues 587–598; sequence AQEKSDKEQANG.

The protein belongs to the FAD-dependent oxidoreductase 2 family. FRD/SDH subfamily. In terms of assembly, part of an enzyme complex containing four subunits: a flavoprotein (FrdA), an iron-sulfur protein (FrdB), and two hydrophobic anchor proteins (FrdC and FrdD). Interacts with SdhE. FAD is required as a cofactor.

It is found in the cell inner membrane. The enzyme catalyses a quinone + succinate = fumarate + a quinol. The catalysed reaction is a menaquinone + succinate = a menaquinol + fumarate. Functionally, two distinct, membrane-bound, FAD-containing enzymes are responsible for the catalysis of fumarate and succinate interconversion; the fumarate reductase is used in anaerobic growth, and the succinate dehydrogenase is used in aerobic growth. This Serratia sp. (strain ATCC 39006) (Prodigiosinella confusarubida) protein is Fumarate reductase flavoprotein subunit.